Here is a 276-residue protein sequence, read N- to C-terminus: Mitochondrial outer membrane protein porin of 36 kDa (276 aa).

Belongs to the eukaryotic mitochondrial porin (TC 1.B.8.1) family.

The protein resides in the mitochondrion outer membrane. Forms a channel through the cell membrane that allows diffusion of small hydrophilic molecules. The channel adopts an open conformation at low or zero membrane potential and a closed conformation at potentials above 30-40 mV. The open state has a weak anion selectivity whereas the closed state is cation-selective. The protein is Mitochondrial outer membrane protein porin of 36 kDa of Solanum tuberosum (Potato).